The sequence spans 227 residues: Phosphoribosylformylglycinamidine synthase subunit PurQ (227 aa).

One can recognise a Glutamine amidotransferase type-1 domain in the interval 3–227; sequence FAVIVFPGSN…NWRESHVTAS (225 aa). The Nucleophile role is filled by Cys-86. Catalysis depends on residues His-194 and Glu-196.

In terms of assembly, part of the FGAM synthase complex composed of 1 PurL, 1 PurQ and 2 PurS subunits.

It localises to the cytoplasm. It carries out the reaction N(2)-formyl-N(1)-(5-phospho-beta-D-ribosyl)glycinamide + L-glutamine + ATP + H2O = 2-formamido-N(1)-(5-O-phospho-beta-D-ribosyl)acetamidine + L-glutamate + ADP + phosphate + H(+). It catalyses the reaction L-glutamine + H2O = L-glutamate + NH4(+). It functions in the pathway purine metabolism; IMP biosynthesis via de novo pathway; 5-amino-1-(5-phospho-D-ribosyl)imidazole from N(2)-formyl-N(1)-(5-phospho-D-ribosyl)glycinamide: step 1/2. Part of the phosphoribosylformylglycinamidine synthase complex involved in the purines biosynthetic pathway. Catalyzes the ATP-dependent conversion of formylglycinamide ribonucleotide (FGAR) and glutamine to yield formylglycinamidine ribonucleotide (FGAM) and glutamate. The FGAM synthase complex is composed of three subunits. PurQ produces an ammonia molecule by converting glutamine to glutamate. PurL transfers the ammonia molecule to FGAR to form FGAM in an ATP-dependent manner. PurS interacts with PurQ and PurL and is thought to assist in the transfer of the ammonia molecule from PurQ to PurL. The chain is Phosphoribosylformylglycinamidine synthase subunit PurQ from Shouchella clausii (strain KSM-K16) (Alkalihalobacillus clausii).